The sequence spans 357 residues: DNA replication and repair protein RecF (357 aa).

G30–T37 provides a ligand contact to ATP.

It belongs to the RecF family.

The protein localises to the cytoplasm. The RecF protein is involved in DNA metabolism; it is required for DNA replication and normal SOS inducibility. RecF binds preferentially to single-stranded, linear DNA. It also seems to bind ATP. In Salmonella agona (strain SL483), this protein is DNA replication and repair protein RecF.